A 71-amino-acid polypeptide reads, in one-letter code: Large ribosomal subunit protein bL31 (71 aa).

Residues cysteine 16, cysteine 18, cysteine 36, and cysteine 39 each coordinate Zn(2+).

It belongs to the bacterial ribosomal protein bL31 family. Type A subfamily. As to quaternary structure, part of the 50S ribosomal subunit. It depends on Zn(2+) as a cofactor.

In terms of biological role, binds the 23S rRNA. This Syntrophus aciditrophicus (strain SB) protein is Large ribosomal subunit protein bL31.